A 347-amino-acid polypeptide reads, in one-letter code: 4-hydroxy-2-oxovalerate aldolase (347 aa).

Residues 2–252 (ILISDATLRD…DTRTTFERVM (251 aa)) form the Pyruvate carboxyltransferase domain. Position 10–11 (10–11 (RD)) interacts with substrate. D11 lines the Mn(2+) pocket. H14 serves as the catalytic Proton acceptor. Positions 164 and 191 each coordinate substrate. Mn(2+) contacts are provided by H191 and H193.

It belongs to the 4-hydroxy-2-oxovalerate aldolase family.

It catalyses the reaction (S)-4-hydroxy-2-oxopentanoate = acetaldehyde + pyruvate. This chain is 4-hydroxy-2-oxovalerate aldolase (mhpE), found in Burkholderia pseudomallei (strain K96243).